Reading from the N-terminus, the 103-residue chain is Urease subunit beta (103 aa).

The protein belongs to the urease beta subunit family. In terms of assembly, heterotrimer of UreA (gamma), UreB (beta) and UreC (alpha) subunits. Three heterotrimers associate to form the active enzyme.

The protein localises to the cytoplasm. It carries out the reaction urea + 2 H2O + H(+) = hydrogencarbonate + 2 NH4(+). Its pathway is nitrogen metabolism; urea degradation; CO(2) and NH(3) from urea (urease route): step 1/1. The sequence is that of Urease subunit beta from Streptomyces coelicolor (strain ATCC BAA-471 / A3(2) / M145).